Here is a 130-residue protein sequence, read N- to C-terminus: uncharacterized protein (130 aa).

Positions 1 to 62 (MRMYSSDAHE…ASGVGSSCKR (62 aa)) are disordered. Residues 21–30 (PPHPLPPTGS) show a composition bias toward pro residues.

This is an uncharacterized protein from Homo sapiens (Human).